Here is a 331-residue protein sequence, read N- to C-terminus: Dof zinc finger protein DOF1.1 (331 aa).

The Dof-type zinc-finger motif lies at 77–131 (LKCPRCDSSNTKFCYYNNYNLTQPRHFCKGCRRYWTQGGALRNVPVGGGCRRNNK). Residues Cys79, Cys82, Cys104, and Cys107 each coordinate Zn(2+). Disordered stretches follow at residues 121–166 (PVGG…TNHQ) and 291–331 (EEQP…NDLL). Positions 135–160 (NGNLKSSSSSSKQSSSVNAQSPSSGQ) are enriched in low complexity. The span at 305–316 (GLTSPGNQTNQY) shows a compositional bias: polar residues.

In terms of assembly, interacts with OBF4. In terms of tissue distribution, expressed in the vasculature (mainly in the phloem and associated cell files) of cotyledons, leaves, roots, flower stalks and petals. The PEAR proteins (e.g. DOF2.4, DOF5.1, DOF3.2, DOF1.1, DOF5.6 and DOF5.3) form a short-range concentration gradient that peaks at protophloem sieve elements (PSE).

The protein resides in the nucleus. Functionally, transcription factor that binds specifically to a 5'-AA[AG]G-3' consensus core sequence. Enhances the DNA binding of OBF transcription factors to OCS elements. Involved in the regulation of root development. The PEAR proteins (e.g. DOF2.4, DOF5.1, DOF3.2, DOF1.1, DOF5.6 and DOF5.3) activate gene expression that promotes radial growth of protophloem sieve elements. Element of a regulatory network controlling indole glucosinolates (IGS) biosynthesis, probably by inducing the expression of accurate genes (e.g. CYP83B1). Promotes apical dominance. This Arabidopsis thaliana (Mouse-ear cress) protein is Dof zinc finger protein DOF1.1.